The primary structure comprises 471 residues: Ribulose bisphosphate carboxylase large chain (471 aa).

N6,N6,N6-trimethyllysine is present on lysine 5. Asparagine 114 and threonine 164 together coordinate substrate. Lysine 166 (proton acceptor) is an active-site residue. Residue lysine 168 coordinates substrate. Lysine 192, aspartate 194, and glutamate 195 together coordinate Mg(2+). Lysine 192 carries the N6-carboxylysine modification. Histidine 285 serves as the catalytic Proton acceptor. The substrate site is built by arginine 286, histidine 318, and serine 370.

It belongs to the RuBisCO large chain family. Type I subfamily. As to quaternary structure, heterohexadecamer of 8 large chains and 8 small chains; disulfide-linked. The disulfide link is formed within the large subunit homodimers. The cofactor is Mg(2+). Post-translationally, the disulfide bond which can form in the large chain dimeric partners within the hexadecamer appears to be associated with oxidative stress and protein turnover.

Its subcellular location is the plastid. It localises to the chloroplast. It carries out the reaction 2 (2R)-3-phosphoglycerate + 2 H(+) = D-ribulose 1,5-bisphosphate + CO2 + H2O. It catalyses the reaction D-ribulose 1,5-bisphosphate + O2 = 2-phosphoglycolate + (2R)-3-phosphoglycerate + 2 H(+). Functionally, ruBisCO catalyzes two reactions: the carboxylation of D-ribulose 1,5-bisphosphate, the primary event in carbon dioxide fixation, as well as the oxidative fragmentation of the pentose substrate in the photorespiration process. Both reactions occur simultaneously and in competition at the same active site. This Anthocleista grandiflora (Forest fever tree) protein is Ribulose bisphosphate carboxylase large chain.